A 246-amino-acid chain; its full sequence is V-type proton ATPase subunit D 1 (246 aa).

It belongs to the V-ATPase D subunit family. In terms of assembly, V-ATPase is a heteromultimeric enzyme made up of two complexes: the ATP-hydrolytic V1 complex and the proton translocation V0 complex. The V1 complex consists of three catalytic AB heterodimers that form a heterohexamer, three peripheral stalks each consisting of EG heterodimers, one central rotor including subunits D and F, and the regulatory subunits C and H. The proton translocation complex V0 consists of the proton transport subunit a, a ring of proteolipid subunits c9c'', rotary subunit d, subunits e and f, and the accessory subunits VhaAC45 and ATP6AP2.

Subunit of the V1 complex of vacuolar(H+)-ATPase (V-ATPase), a multisubunit enzyme composed of a peripheral complex (V1) that hydrolyzes ATP and a membrane integral complex (V0) that translocates protons. V-ATPase is responsible for acidifying and maintaining the pH of intracellular compartments and in some cell types, is targeted to the plasma membrane, where it is responsible for acidifying the extracellular environment. This is V-type proton ATPase subunit D 1 (Vha36-1) from Drosophila melanogaster (Fruit fly).